Consider the following 77-residue polypeptide: Protein UL148C (77 aa).

Helical transmembrane passes span 10-30 (VLYLLALVVWVEMFCLVAVAV) and 35-55 (IAWALLLRMLVVGLMVEVGAA).

Its subcellular location is the host membrane. This Homo sapiens (Human) protein is Protein UL148C (UL148C).